A 316-amino-acid polypeptide reads, in one-letter code: MVVMPPQNSVNESEGRYLQDGFWQHGRFYGSWKPGKYLFPIDSEELNRLDIFHKVFLLARDNKPFLAPIRRPSPRIMDIGTGTGIWAINVAEECLSDAQIMAVDLNQIQPALIPPGFMPKQYDIEEPSWGPLLTDCDLIHMRMLLGSIQTDLWPQVYHNVFEHLTPGIGFFEHIEVDWIPRCDDDERPANSAFVKWAELFLDGMDRFNRSVRVTPQEHRQMLEAAGFTDIRQEVIKAYVCPWSADRNEREIARWFNIGLSHSLEAMSLKPLIEKLGFEAEEVRELCERAKRETCVLRYHTYCNIHVWTARKPGPQQ.

This sequence belongs to the methyltransferase superfamily. LaeA methyltransferase family. As to quaternary structure, component of the heterotrimeric velvet complex composed of laeA, veA and velB; VeA acting as a bridging protein between laeA and velB.

Its subcellular location is the nucleus. The enzyme catalyses L-methionyl-[protein] + S-adenosyl-L-methionine = S-methyl-L-methionyl-[protein] + S-adenosyl-L-homocysteine. In terms of biological role, methyltransferase that performs automethylation. No other methyl-accepting substrate has been identified yet. Component of the velvet transcription factor complex that acts as a global regulator for secondary metabolite gene expression. Controls the biosynthetic gene cluster for beauvericin, a depsipeptide mycotoxin that functions as a virulence determinant. The velvet complex also regulates chromatin structure and transcription of siderophore biosynthetic genes and is required for infection of tomato plants. The velvet complex also governs expression of nitrate metabolism genes. The chain is Secondary metabolism regulator laeA from Fusarium oxysporum f. sp. lycopersici (strain 4287 / CBS 123668 / FGSC 9935 / NRRL 34936) (Fusarium vascular wilt of tomato).